The following is a 66-amino-acid chain: Large ribosomal subunit protein bL35 (66 aa).

It belongs to the bacterial ribosomal protein bL35 family.

This Beijerinckia indica subsp. indica (strain ATCC 9039 / DSM 1715 / NCIMB 8712) protein is Large ribosomal subunit protein bL35.